A 935-amino-acid chain; its full sequence is Protocadherin gamma-A11 (935 aa).

The signal sequence occupies residues 1 to 29 (MANRLQRGDRSRLLLLLCIFLGTLRGFRA). Cadherin domains are found at residues 30 to 134 (RQIR…APSF), 135 to 243 (QEDE…IPMF), 244 to 348 (TQSV…APEI), 349 to 453 (TITS…PPVF), 454 to 563 (PHSS…APEI), and 571 to 677 (DGST…ADLG). Over 30-693 (RQIRYSVPEE…NSETSDLSLY (664 aa)) the chain is Extracellular. The N-linked (GlcNAc...) asparagine glycan is linked to Asn48. N-linked (GlcNAc...) asparagine glycans are attached at residues Asn255, Asn266, Asn420, and Asn546. Residues 694 to 714 (LVVAVAAVSCIFLVFVIVLLA) traverse the membrane as a helical segment. Topologically, residues 715-935 (LRLWRWHKSR…KKKSGKKEKK (221 aa)) are cytoplasmic. Disordered stretches follow at residues 805-844 (CDPT…WPNN) and 905-935 (ATLT…KEKK). Positions 807–844 (PTSNQQAPPNTDWRFSQAQRPGTSGSQNGDDTGTWPNN) are enriched in polar residues. The span at 925-935 (NKKKSGKKEKK) shows a compositional bias: basic residues.

The protein resides in the cell membrane. In terms of biological role, potential calcium-dependent cell-adhesion protein. May be involved in the establishment and maintenance of specific neuronal connections in the brain. This is Protocadherin gamma-A11 (PCDHGA11) from Homo sapiens (Human).